The primary structure comprises 402 residues: UPF0261 protein BPP1817 (402 aa).

Belongs to the UPF0261 family.

This Bordetella parapertussis (strain 12822 / ATCC BAA-587 / NCTC 13253) protein is UPF0261 protein BPP1817.